The following is a 760-amino-acid chain: ATP-dependent zinc metalloprotease FtsH (760 aa).

Residues 1 to 5 (MNRKN) are Cytoplasmic-facing. The chain crosses the membrane as a helical span at residues 6-26 (VTRTITAIAVVVLLGWSFFYF). Over 27-110 (SDDTRGYKPV…KVSTVVNQGS (84 aa)) the chain is Extracellular. A helical transmembrane segment spans residues 111–131 (ILGELLVYVLPLLLLVGLFVM). Residues 132 to 760 (FSRMQGGARM…EVSRTKPAHG (629 aa)) lie on the Cytoplasmic side of the membrane. 203 to 210 (GPPGTGKT) contacts ATP. Zn(2+) is bound at residue histidine 425. Glutamate 426 is a catalytic residue. Positions 429 and 501 each coordinate Zn(2+). The tract at residues 616–760 (DFGGRIPSDK…EVSRTKPAHG (145 aa)) is disordered. Low complexity predominate over residues 650-669 (AFKAAIAQATQAAEAARSDA). Over residues 740–750 (GSDESSAEQDD) the composition is skewed to acidic residues.

It in the central section; belongs to the AAA ATPase family. This sequence in the C-terminal section; belongs to the peptidase M41 family. In terms of assembly, homohexamer. It depends on Zn(2+) as a cofactor.

It is found in the cell membrane. Functionally, acts as a processive, ATP-dependent zinc metallopeptidase for both cytoplasmic and membrane proteins. Plays a role in the quality control of integral membrane proteins. This chain is ATP-dependent zinc metalloprotease FtsH, found in Mycobacterium tuberculosis (strain CDC 1551 / Oshkosh).